The primary structure comprises 194 residues: [Ribosomal protein uS5]-alanine N-acetyltransferase (194 aa).

Residues 18 to 188 enclose the N-acetyltransferase domain; that stretch reads LVVRLVHDRD…DHVLTALTTP (171 aa).

This sequence belongs to the acetyltransferase family. RimJ subfamily.

It localises to the cytoplasm. It carries out the reaction N-terminal L-alanyl-[ribosomal protein uS5] + acetyl-CoA = N-terminal N(alpha)-acetyl-L-alanyl-[ribosomal protein uS5] + CoA + H(+). In terms of biological role, acetylates the N-terminal alanine of ribosomal protein uS5. The protein is [Ribosomal protein uS5]-alanine N-acetyltransferase (rimJ) of Shigella flexneri.